Reading from the N-terminus, the 423-residue chain is Histidinol dehydrogenase (423 aa).

Tyrosine 116, glutamine 177, and asparagine 200 together coordinate NAD(+). Residues serine 223, glutamine 245, and histidine 248 each coordinate substrate. Glutamine 245 and histidine 248 together coordinate Zn(2+). Active-site proton acceptor residues include glutamate 313 and histidine 314. The substrate site is built by histidine 314, aspartate 347, glutamate 401, and histidine 406. Aspartate 347 contributes to the Zn(2+) binding site. Zn(2+) is bound at residue histidine 406.

It belongs to the histidinol dehydrogenase family. Zn(2+) is required as a cofactor.

The catalysed reaction is L-histidinol + 2 NAD(+) + H2O = L-histidine + 2 NADH + 3 H(+). The protein operates within amino-acid biosynthesis; L-histidine biosynthesis; L-histidine from 5-phospho-alpha-D-ribose 1-diphosphate: step 9/9. In terms of biological role, catalyzes the sequential NAD-dependent oxidations of L-histidinol to L-histidinaldehyde and then to L-histidine. This Staphylococcus saprophyticus subsp. saprophyticus (strain ATCC 15305 / DSM 20229 / NCIMB 8711 / NCTC 7292 / S-41) protein is Histidinol dehydrogenase.